Reading from the N-terminus, the 428-residue chain is Putative zinc metalloprotease SACOL1281 (428 aa).

Histidine 21 contacts Zn(2+). The active site involves glutamate 22. Histidine 25 serves as a coordination point for Zn(2+). The next 4 helical transmembrane spans lie at phenylalanine 172 to alanine 194, glycine 309 to phenylalanine 331, isoleucine 352 to isoleucine 374, and threonine 401 to tryptophan 420. In terms of domain architecture, PDZ spans alanine 186 to lysine 269.

Belongs to the peptidase M50B family. Zn(2+) serves as cofactor.

The protein localises to the cell membrane. The polypeptide is Putative zinc metalloprotease SACOL1281 (Staphylococcus aureus (strain COL)).